The sequence spans 170 residues: Cytochrome c-type biogenesis protein CcmE (170 aa).

The Cytoplasmic segment spans residues 1-7; sequence MTRKKRR. A helical; Signal-anchor for type II membrane protein membrane pass occupies residues 8-28; that stretch reads LILIAACGSVLALAVGLILYA. Over 29-170 the chain is Periplasmic; that stretch reads MSGSIVFFRS…DSTLGPRSER (142 aa). Residues H122 and Y126 each contribute to the heme site. Positions 132 to 170 are disordered; sequence ADALKAQGRWQEGGPNRGGPAPKPATAAADSTLGPRSER.

Belongs to the CcmE/CycJ family.

Its subcellular location is the cell inner membrane. Its function is as follows. Heme chaperone required for the biogenesis of c-type cytochromes. Transiently binds heme delivered by CcmC and transfers the heme to apo-cytochromes in a process facilitated by CcmF and CcmH. The polypeptide is Cytochrome c-type biogenesis protein CcmE (Methylobacterium radiotolerans (strain ATCC 27329 / DSM 1819 / JCM 2831 / NBRC 15690 / NCIMB 10815 / 0-1)).